The sequence spans 139 residues: Large ribosomal subunit protein uL16 (139 aa).

Belongs to the universal ribosomal protein uL16 family. In terms of assembly, part of the 50S ribosomal subunit.

Binds 23S rRNA and is also seen to make contacts with the A and possibly P site tRNAs. The chain is Large ribosomal subunit protein uL16 from Rippkaea orientalis (strain PCC 8801 / RF-1) (Cyanothece sp. (strain PCC 8801)).